Here is a 149-residue protein sequence, read N- to C-terminus: Transcriptional regulator MraZ (149 aa).

SpoVT-AbrB domains follow at residues 6–52 (RSHR…PYPD) and 81–124 (AEEM…DQSK).

Belongs to the MraZ family. In terms of assembly, forms oligomers.

The protein localises to the cytoplasm. It localises to the nucleoid. In Nitratidesulfovibrio vulgaris (strain ATCC 29579 / DSM 644 / CCUG 34227 / NCIMB 8303 / VKM B-1760 / Hildenborough) (Desulfovibrio vulgaris), this protein is Transcriptional regulator MraZ.